A 120-amino-acid polypeptide reads, in one-letter code: Large ribosomal subunit protein uL18 (120 aa).

The protein belongs to the universal ribosomal protein uL18 family. In terms of assembly, part of the 50S ribosomal subunit; part of the 5S rRNA/L5/L18/L25 subcomplex. Contacts the 5S and 23S rRNAs.

In terms of biological role, this is one of the proteins that bind and probably mediate the attachment of the 5S RNA into the large ribosomal subunit, where it forms part of the central protuberance. The protein is Large ribosomal subunit protein uL18 of Methylocella silvestris (strain DSM 15510 / CIP 108128 / LMG 27833 / NCIMB 13906 / BL2).